The primary structure comprises 459 residues: Spermidine/putrescine import ATP-binding protein PotA (459 aa).

Residues 15–334 (IELIDIVKQF…PRNIWVAKFI (320 aa)) enclose the ABC transporter domain. 47–54 (GPSGSGKT) serves as a coordination point for ATP. Positions 115–203 (RVPKENVKKE…EEFKNKYFKR (89 aa)) are insert.

The protein belongs to the ABC transporter superfamily. Spermidine/putrescine importer (TC 3.A.1.11.1) family. As to quaternary structure, the complex is composed of two ATP-binding proteins (PotA), two transmembrane proteins (PotB and PotC) and a solute-binding protein (PotD).

Its subcellular location is the cell membrane. The catalysed reaction is ATP + H2O + polyamine-[polyamine-binding protein]Side 1 = ADP + phosphate + polyamineSide 2 + [polyamine-binding protein]Side 1.. Part of the ABC transporter complex PotABCD involved in spermidine/putrescine import. Responsible for energy coupling to the transport system. The polypeptide is Spermidine/putrescine import ATP-binding protein PotA (Mycoplasmopsis synoviae (strain 53) (Mycoplasma synoviae)).